The chain runs to 143 residues: Small ribosomal subunit protein uS9 (143 aa).

Serine 2 carries the post-translational modification N-acetylserine. Positions 123–143 are disordered; sequence MPEPKKFGGKGARSRYQKSYR. Residues 134–143 show a composition bias toward basic residues; sequence ARSRYQKSYR.

Belongs to the universal ribosomal protein uS9 family.

The chain is Small ribosomal subunit protein uS9 (RPS16) from Maudiozyma exigua (Yeast).